A 124-amino-acid polypeptide reads, in one-letter code: MAISKEDILEAVGSMTVMELNDLVKAFEEKFGVSAASMAVAAPGAGAAAAPVEEKTEFDVILLAAGEKKVEAIKVVRAATGLGLKEAKDLVDGAPKAVKEGISKADAEAIKKQLEDAGAKVEIK.

It belongs to the bacterial ribosomal protein bL12 family. As to quaternary structure, homodimer. Part of the ribosomal stalk of the 50S ribosomal subunit. Forms a multimeric L10(L12)X complex, where L10 forms an elongated spine to which 2 to 4 L12 dimers bind in a sequential fashion. Binds GTP-bound translation factors.

Its function is as follows. Forms part of the ribosomal stalk which helps the ribosome interact with GTP-bound translation factors. Is thus essential for accurate translation. The polypeptide is Large ribosomal subunit protein bL12 (Aromatoleum aromaticum (strain DSM 19018 / LMG 30748 / EbN1) (Azoarcus sp. (strain EbN1))).